Here is a 172-residue protein sequence, read N- to C-terminus: Adenine phosphoribosyltransferase (172 aa).

This sequence belongs to the purine/pyrimidine phosphoribosyltransferase family. As to quaternary structure, homodimer.

The protein localises to the cytoplasm. It catalyses the reaction AMP + diphosphate = 5-phospho-alpha-D-ribose 1-diphosphate + adenine. The protein operates within purine metabolism; AMP biosynthesis via salvage pathway; AMP from adenine: step 1/1. In terms of biological role, catalyzes a salvage reaction resulting in the formation of AMP, that is energically less costly than de novo synthesis. The protein is Adenine phosphoribosyltransferase of Clostridium botulinum (strain Loch Maree / Type A3).